Here is a 458-residue protein sequence, read N- to C-terminus: Tetracycline resistance protein (458 aa).

The next 12 membrane-spanning stretches (helical) occupy residues 12–33 (HNQV…EMVL), 81–100 (LLLF…FVGH), 111–129 (FIQG…VVVA), 140–162 (AFGL…GGMV), 165–185 (YIHW…VPFL), 201–221 (MAGI…TTSY), 223–240 (FSFL…VQHI), 256–276 (VFFV…AGFV), 297–317 (GIIF…GLLV), 324–344 (YVLT…AFFI), 346–365 (AAPW…LSFT), and 432–451 (MLIL…LNVY).

Belongs to the major facilitator superfamily. TCR/Tet family.

The protein resides in the cell membrane. In terms of biological role, resistance to tetracycline by an active tetracycline efflux. This is an energy-dependent process that decreases the accumulation of the antibiotic in whole cells. This protein functions as a metal-tetracycline/H(+) antiporter. The chain is Tetracycline resistance protein (tetB) from Bacillus subtilis (strain 168).